A 168-amino-acid polypeptide reads, in one-letter code: Urease accessory protein UreE (168 aa).

Residues 145 to 168 (EGGAYAAGQGGGHGPHGQHTHPHH) are disordered.

It belongs to the UreE family.

It localises to the cytoplasm. Involved in urease metallocenter assembly. Binds nickel. Probably functions as a nickel donor during metallocenter assembly. The protein is Urease accessory protein UreE of Verminephrobacter eiseniae (strain EF01-2).